Here is a 154-residue protein sequence, read N- to C-terminus: U1 small nuclear ribonucleoprotein C (154 aa).

The Matrin-type zinc finger occupies 4 to 36 (YYCDYCDTYLTHDSPSVRKTHCTGRKHKDNVKF).

It belongs to the U1 small nuclear ribonucleoprotein C family. As to quaternary structure, U1 snRNP is composed of the 7 core Sm proteins B/B', D1, D2, D3, E, F and G that assemble in a heptameric protein ring on the Sm site of the small nuclear RNA to form the core snRNP, and at least 3 U1 snRNP-specific proteins U1-70K, U1-A and U1-C. U1-C interacts with U1 snRNA and the 5' splice-site region of the pre-mRNA.

Its subcellular location is the nucleus. Component of the spliceosomal U1 snRNP, which is essential for recognition of the pre-mRNA 5' splice-site and the subsequent assembly of the spliceosome. U1-C is directly involved in initial 5' splice-site recognition for both constitutive and regulated alternative splicing. The interaction with the 5' splice-site seems to precede base-pairing between the pre-mRNA and the U1 snRNA. Stimulates commitment or early (E) complex formation by stabilizing the base pairing of the 5' end of the U1 snRNA and the 5' splice-site region. The chain is U1 small nuclear ribonucleoprotein C from Aedes aegypti (Yellowfever mosquito).